A 159-amino-acid polypeptide reads, in one-letter code: Transcriptional repressor NrdR (159 aa).

Residues 3-34 (CPTCQNTDSRVLESRSADTGKSVRRRRECLNC) fold into a zinc finger. In terms of domain architecture, ATP-cone spans 49 to 139 (ISVIKKDGSR…VYRKFNGVKD (91 aa)).

It belongs to the NrdR family. Requires Zn(2+) as cofactor.

Functionally, negatively regulates transcription of bacterial ribonucleotide reductase nrd genes and operons by binding to NrdR-boxes. This is Transcriptional repressor NrdR from Prochlorococcus marinus subsp. pastoris (strain CCMP1986 / NIES-2087 / MED4).